Here is a 256-residue protein sequence, read N- to C-terminus: Thiazole synthase (256 aa).

Residue Lys95 is the Schiff-base intermediate with DXP of the active site. 1-deoxy-D-xylulose 5-phosphate-binding positions include Gly156, 182–183 (AG), and 204–205 (NT).

It belongs to the ThiG family. In terms of assembly, homotetramer. Forms heterodimers with either ThiH or ThiS.

The protein resides in the cytoplasm. The enzyme catalyses [ThiS sulfur-carrier protein]-C-terminal-Gly-aminoethanethioate + 2-iminoacetate + 1-deoxy-D-xylulose 5-phosphate = [ThiS sulfur-carrier protein]-C-terminal Gly-Gly + 2-[(2R,5Z)-2-carboxy-4-methylthiazol-5(2H)-ylidene]ethyl phosphate + 2 H2O + H(+). The protein operates within cofactor biosynthesis; thiamine diphosphate biosynthesis. Functionally, catalyzes the rearrangement of 1-deoxy-D-xylulose 5-phosphate (DXP) to produce the thiazole phosphate moiety of thiamine. Sulfur is provided by the thiocarboxylate moiety of the carrier protein ThiS. In vitro, sulfur can be provided by H(2)S. This is Thiazole synthase from Escherichia coli O7:K1 (strain IAI39 / ExPEC).